The primary structure comprises 469 residues: Ribulose bisphosphate carboxylase large chain (469 aa).

An N6,N6,N6-trimethyllysine modification is found at Lys-8. Substrate contacts are provided by Asn-117 and Thr-167. Residue Lys-169 is the Proton acceptor of the active site. Lys-171 is a substrate binding site. Lys-195, Asp-197, and Glu-198 together coordinate Mg(2+). Lys-195 is subject to N6-carboxylysine. The active-site Proton acceptor is the His-288. Substrate contacts are provided by Arg-289, His-321, and Ser-373.

It belongs to the RuBisCO large chain family. Type I subfamily. Heterohexadecamer of 8 large chains and 8 small chains; disulfide-linked. The disulfide link is formed within the large subunit homodimers. The cofactor is Mg(2+). The disulfide bond which can form in the large chain dimeric partners within the hexadecamer appears to be associated with oxidative stress and protein turnover.

It localises to the plastid. The protein localises to the chloroplast. It carries out the reaction 2 (2R)-3-phosphoglycerate + 2 H(+) = D-ribulose 1,5-bisphosphate + CO2 + H2O. The catalysed reaction is D-ribulose 1,5-bisphosphate + O2 = 2-phosphoglycolate + (2R)-3-phosphoglycerate + 2 H(+). In terms of biological role, ruBisCO catalyzes two reactions: the carboxylation of D-ribulose 1,5-bisphosphate, the primary event in carbon dioxide fixation, as well as the oxidative fragmentation of the pentose substrate in the photorespiration process. Both reactions occur simultaneously and in competition at the same active site. This chain is Ribulose bisphosphate carboxylase large chain, found in Coleonema pulchellum (Confetti bush).